The primary structure comprises 231 residues: Cysteine-rich venom protein VAR10 (231 aa).

Residues Met-1–Gly-19 form the signal peptide. The SCP domain maps to Asn-41–Tyr-169. 5 disulfides stabilise this stretch: Cys-77–Cys-156, Cys-95–Cys-170, Cys-151–Cys-167, Cys-189–Cys-196, and Cys-214–Cys-231. A ShKT domain is found at Cys-205–Cys-231.

Belongs to the CRISP family. In terms of processing, contains 8 disulfide bonds. Expressed by the venom gland.

The protein localises to the secreted. In terms of biological role, blocks ryanodine receptors, and potassium channels. In Varanus varius (Lace monitor lizard), this protein is Cysteine-rich venom protein VAR10.